The sequence spans 575 residues: Carboxylesterase 5A (575 aa).

Residues 1–28 (MSGDWVRPGQALIWVIWIFGAIIEGSVT) form the signal peptide. Cys-94 and Cys-121 form a disulfide bridge. Residue Asn-134 is glycosylated (N-linked (GlcNAc...) asparagine). Ser-226 (acyl-ester intermediate) is an active-site residue. Cys-280 and Cys-291 are joined by a disulfide. An N-linked (GlcNAc...) asparagine glycan is attached at Asn-281. The Charge relay system role is filled by Glu-345. Asn-363 carries N-linked (GlcNAc...) asparagine glycosylation. His-454 (charge relay system) is an active-site residue. A glycan (N-linked (GlcNAc...) asparagine) is linked at Asn-524.

It belongs to the type-B carboxylesterase/lipase family. In terms of processing, N-glycosylated.

It is found in the secreted. It catalyses the reaction a carboxylic ester + H2O = an alcohol + a carboxylate + H(+). Its function is as follows. Involved in the detoxification of xenobiotics and in the activation of ester and amide prodrugs. This chain is Carboxylesterase 5A (Ces5a), found in Mus musculus (Mouse).